A 416-amino-acid chain; its full sequence is Gamma-glutamyl phosphate reductase (416 aa).

This sequence belongs to the gamma-glutamyl phosphate reductase family.

The protein localises to the cytoplasm. The catalysed reaction is L-glutamate 5-semialdehyde + phosphate + NADP(+) = L-glutamyl 5-phosphate + NADPH + H(+). It functions in the pathway amino-acid biosynthesis; L-proline biosynthesis; L-glutamate 5-semialdehyde from L-glutamate: step 2/2. In terms of biological role, catalyzes the NADPH-dependent reduction of L-glutamate 5-phosphate into L-glutamate 5-semialdehyde and phosphate. The product spontaneously undergoes cyclization to form 1-pyrroline-5-carboxylate. The protein is Gamma-glutamyl phosphate reductase of Streptococcus pyogenes serotype M49 (strain NZ131).